A 212-amino-acid chain; its full sequence is 3-isopropylmalate dehydratase small subunit (212 aa).

The protein belongs to the LeuD family. LeuD type 1 subfamily. In terms of assembly, heterodimer of LeuC and LeuD.

It catalyses the reaction (2R,3S)-3-isopropylmalate = (2S)-2-isopropylmalate. The protein operates within amino-acid biosynthesis; L-leucine biosynthesis; L-leucine from 3-methyl-2-oxobutanoate: step 2/4. In terms of biological role, catalyzes the isomerization between 2-isopropylmalate and 3-isopropylmalate, via the formation of 2-isopropylmaleate. The chain is 3-isopropylmalate dehydratase small subunit from Thiobacillus denitrificans (strain ATCC 25259 / T1).